A 238-amino-acid chain; its full sequence is Probable transcriptional regulatory protein Sde_1551 (238 aa).

The protein belongs to the TACO1 family.

The protein resides in the cytoplasm. The sequence is that of Probable transcriptional regulatory protein Sde_1551 from Saccharophagus degradans (strain 2-40 / ATCC 43961 / DSM 17024).